A 461-amino-acid polypeptide reads, in one-letter code: D-phenylhydantoinase (461 aa).

A divalent metal cation is bound by residues His-59, His-61, and Lys-151. Lys-151 bears the N6-carboxylysine mark. Tyr-156 serves as a coordination point for substrate. 2 residues coordinate a divalent metal cation: His-182 and His-239. Ser-286 is a binding site for substrate. Asp-313 lines the a divalent metal cation pocket. Residue Asn-335 participates in substrate binding.

Belongs to the metallo-dependent hydrolases superfamily. Hydantoinase/dihydropyrimidinase family. Homotetramer. It depends on Zn(2+) as a cofactor. Requires Ni(2+) as cofactor. The cofactor is Co(2+). Mn(2+) is required as a cofactor. In terms of processing, carboxylation allows a single lysine to coordinate two divalent metal cations.

The catalysed reaction is D-5-phenylhydantoin + H2O = N-carbamoyl-D-phenylglycine + H(+). In terms of biological role, catalyzes the stereospecific hydrolysis of the cyclic amide bond of D-hydantoin derivatives with an aromatic side chains at the 5'-position. Has no activity on dihydropyrimidines. The physiological function is unknown. The sequence is that of D-phenylhydantoinase (hyuA) from Escherichia coli (strain K12).